The chain runs to 139 residues: Cellular retinoic acid-binding protein 2 (139 aa).

The Nuclear localization signal motif lies at 21-31; it reads KALGVNMMMRK. Lys103 is covalently cross-linked (Glycyl lysine isopeptide (Lys-Gly) (interchain with G-Cter in SUMO)). Residue 134–136 participates in all-trans-retinoate binding; the sequence is RVY.

Belongs to the calycin superfamily. Fatty-acid binding protein (FABP) family. Interacts with importin alpha, RXR and RARA. In terms of processing, sumoylated in response to retinoic acid binding, sumoylation is critical for dissociation from ER and subsequent nuclear translocation.

It localises to the cytoplasm. The protein localises to the endoplasmic reticulum. The protein resides in the nucleus. Functionally, transports retinoic acid to the nucleus. Regulates the access of retinoic acid to the nuclear retinoic acid receptors. The sequence is that of Cellular retinoic acid-binding protein 2 (Crabp2) from Rattus norvegicus (Rat).